A 199-amino-acid chain; its full sequence is Alpha-D-glucose 1-phosphate phosphatase YihX (199 aa).

D6 serves as the catalytic Nucleophile. D6 lines the Mg(2+) pocket. Substrate-binding positions include 6–8 (DLG), 107–108 (SN), K141, and D166. D166 contacts Mg(2+).

Belongs to the HAD-like hydrolase superfamily. YihX family. Requires Mg(2+) as cofactor. It depends on Mn(2+) as a cofactor. Co(2+) serves as cofactor. The cofactor is Zn(2+).

It carries out the reaction alpha-D-glucose 1-phosphate + H2O = D-glucose + phosphate. Functionally, catalyzes the dephosphorylation of alpha-D-glucose 1-phosphate (Glc1P) and, to a lesser extent, of other sugar phosphates. Has no activity with the beta form of Glc1P. In addition, YihX has significant phosphatase activity against pyridoxal phosphate (PLP) and low beta-phosphoglucomutase activity. The chain is Alpha-D-glucose 1-phosphate phosphatase YihX (yihX) from Escherichia coli (strain K12).